The chain runs to 315 residues: Prephenate dehydratase (315 aa).

Positions 3 to 189 constitute a Prephenate dehydratase domain; sequence RIAYLGPEGT…ARTRFLLIGV (187 aa). Residues 203 to 280 form the ACT domain; the sequence is SVVLRIANVP…ADVRYLGSWP (78 aa).

Homodimer.

The enzyme catalyses prephenate + H(+) = 3-phenylpyruvate + CO2 + H2O. The protein operates within amino-acid biosynthesis; L-phenylalanine biosynthesis; phenylpyruvate from prephenate: step 1/1. This chain is Prephenate dehydratase (pheA), found in Mycobacterium marinum (strain ATCC BAA-535 / M).